Here is a 74-residue protein sequence, read N- to C-terminus: Translational regulator CsrA (74 aa).

The protein belongs to the CsrA/RsmA family. In terms of assembly, homodimer. The beta-strands of each monomer intercalate to form a hydrophobic core while the alpha-helices form wings that extend away from the core. Two molecules of FliW interact with 1 homodimer. mRNA and FliW bind to different sites on CsrA.

It localises to the cytoplasm. Functionally, a translational regulator that binds mRNA to regulate translation initiation and/or mRNA stability. Usually binds in the 5'-UTR at or near the Shine-Dalgarno sequence preventing ribosome-binding, thus repressing translation. Represses expression of flagellin (hag) in a post-transcriptional fashion. Specifically binds to 2 sites in the 5'-UTR of hag mRNA in a cooperative fashion; the second site overlaps the Shine-Dalgarno sequence and prevents 30S ribosomal subunit binding. Mutation of either binding site abolishes CsrA regulation of hag expression. Repression is greater in the 1A96 than 168 genetic background and higher in minimal than rich medium. Translation repression is antagonized by FliW. Partner switching by flagellin between FliW and CsrA provides a flagellar assembly checkpoint to tightly control the timing of flagellin synthesis. Flagellin binds to assembly factor FliW, freeing CsrA to repress translation of the flagellin mRNA. When the flagellar hook is assembled flagellin is secreted, depleting intracellular flagellin, which frees FliW to interact with CsrA and inhibits CsrA binding to mRNA. This derepresses flagellin translation and provides protein for flagellar assembly. Once the flagellar filament is completed cytoplasmic flagellin levels rise and CsrA translation repression of flagellin reinitiates. Overexpression leads to a dramatic reduction in motility, a significant reduction in flagellin synthesis and reduced flagella assembly. The sequence is that of Translational regulator CsrA from Bacillus subtilis (strain 168).